Reading from the N-terminus, the 467-residue chain is Ribulose bisphosphate carboxylase large chain (467 aa).

Residues 1–2 constitute a propeptide that is removed on maturation; that stretch reads MS. Position 3 is an N-acetylproline (Pro3). An N6,N6,N6-trimethyllysine modification is found at Lys14. Substrate-binding residues include Asn123 and Thr173. The active-site Proton acceptor is Lys175. Lys177 provides a ligand contact to substrate. 3 residues coordinate Mg(2+): Lys201, Asp203, and Glu204. The residue at position 201 (Lys201) is an N6-carboxylysine. The Proton acceptor role is filled by His294. 3 residues coordinate substrate: Arg295, His327, and Ser379.

The protein belongs to the RuBisCO large chain family. Type I subfamily. In terms of assembly, heterohexadecamer of 8 large chains and 8 small chains; disulfide-linked. The disulfide link is formed within the large subunit homodimers. Mg(2+) serves as cofactor. Post-translationally, the disulfide bond which can form in the large chain dimeric partners within the hexadecamer appears to be associated with oxidative stress and protein turnover.

The protein localises to the plastid. Its subcellular location is the chloroplast. It catalyses the reaction 2 (2R)-3-phosphoglycerate + 2 H(+) = D-ribulose 1,5-bisphosphate + CO2 + H2O. The enzyme catalyses D-ribulose 1,5-bisphosphate + O2 = 2-phosphoglycolate + (2R)-3-phosphoglycerate + 2 H(+). Its function is as follows. RuBisCO catalyzes two reactions: the carboxylation of D-ribulose 1,5-bisphosphate, the primary event in carbon dioxide fixation, as well as the oxidative fragmentation of the pentose substrate in the photorespiration process. Both reactions occur simultaneously and in competition at the same active site. In Serenoa repens (Saw palmetto), this protein is Ribulose bisphosphate carboxylase large chain.